Reading from the N-terminus, the 475-residue chain is Peroxisome proliferator-activated receptor gamma (475 aa).

At serine 82 the chain carries Phosphoserine; by MAPK. Positions 106–180 form a DNA-binding region, nuclear receptor; that stretch reads AIECRVCSDK…VGMSHNAIRF (75 aa). NR C4-type zinc fingers lie at residues 109–129 and 146–168; these read CRVCSDKASGFHYGVHACEGC and CDLNCRIHKKSRNKCQYCRFQKC. The interaction with FAM120B stretch occupies residues 175 to 250; that stretch reads HNAIRFGRMP…DKSPFVIYDM (76 aa). One can recognise an NR LBD domain in the interval 208–473; the sequence is DLRALAKHLY…HPLLQEIYKD (266 aa). Residue lysine 222 forms a Glycyl lysine isopeptide (Lys-Gly) (interchain with G-Cter in ubiquitin) linkage. Residues 465-473 carry the 9aaTAD motif; it reads PLLQEIYKD.

Belongs to the nuclear hormone receptor family. NR1 subfamily. In terms of assembly, interacts with FOXO1 (acetylated form). Heterodimer with other nuclear receptors, such as RXRA. The heterodimer with the retinoic acid receptor RXRA is called adipocyte-specific transcription factor ARF6. Interacts with NCOA6 coactivator, leading to a strong increase in transcription of target genes. Interacts with coactivator PPARBP, leading to a mild increase in transcription of target genes. Interacts with NOCA7 in a ligand-inducible manner. Interacts with NCOA1 and NCOA2 LXXLL motifs. Interacts with ASXL1, ASXL2, DNTTIP2, FAM120B, MAP2K1/MEK1, NR0B2, PDPK1, PRDM16, PRMT2 and TGFB1I1. Interacts (when activated by agonist) with PPP5C. Interacts with HELZ2 and THRAP3; the interaction stimulates the transcriptional activity of PPARG. Interacts with PER2, the interaction is ligand dependent and blocks PPARG recruitment to target promoters. Interacts with NOCT. Interacts with ACTN4. Interacts (when in the liganded conformation) with GPS2. Interacts with CRY1 and CRY2 in a ligand-dependent manner. In the absence of hormonal ligand, interacts with TACC1. In macrophages, interacts with PAQR3 and STUB1; the interactions promote PPARG poylubiquitination and STUB1-mediated degradation. In terms of processing, phosphorylated at basal conditions and dephosphorylated when treated with the ligand. May be dephosphorylated by PPP5C. The phosphorylated form may be inactive and dephosphorylation induces adipogenic activity. Ubiquitinated by E3 ubiquitin-protein ligase complex containing FBXO9; leading to proteasomal degradation. Ubiquitinated at Lys-222 by TRIM55 leading to proteasomal degradation. Ubiquitinated by E3 ubiquitin-protein ligase STUB1/CHIP; leading to proteasomal degradation.

It is found in the nucleus. Its subcellular location is the cytoplasm. PDPK1 activates its transcriptional activity independently of its kinase activity. In terms of biological role, nuclear receptor that binds peroxisome proliferators such as hypolipidemic drugs and fatty acids. Once activated by a ligand, the nuclear receptor binds to DNA specific PPAR response elements (PPRE) and modulates the transcription of its target genes, such as acyl-CoA oxidase. It therefore controls the peroxisomal beta-oxidation pathway of fatty acids. Key regulator of adipocyte differentiation and glucose homeostasis. ARF6 acts as a key regulator of the tissue-specific adipocyte P2 (aP2) enhancer. Acts as a critical regulator of gut homeostasis by suppressing NF-kappa-B-mediated pro-inflammatory responses. Plays a role in the regulation of cardiovascular circadian rhythms by regulating the transcription of BMAL1 in the blood vessels. This chain is Peroxisome proliferator-activated receptor gamma (PPARG), found in Oryctolagus cuniculus (Rabbit).